Here is a 343-residue protein sequence, read N- to C-terminus: Anthranilate phosphoribosyltransferase (343 aa).

Residues Gly-84, 87 to 88 (GD), Thr-92, 94 to 97 (NIST), 112 to 120 (KHGNRGVSS), and Ser-124 each bind 5-phospho-alpha-D-ribose 1-diphosphate. Gly-84 is a binding site for anthranilate. A Mg(2+)-binding site is contributed by Ser-96. Asn-115 is an anthranilate binding site. An anthranilate-binding site is contributed by Arg-170. The Mg(2+) site is built by Asp-229 and Glu-230.

It belongs to the anthranilate phosphoribosyltransferase family. As to quaternary structure, homodimer. Mg(2+) serves as cofactor.

It catalyses the reaction N-(5-phospho-beta-D-ribosyl)anthranilate + diphosphate = 5-phospho-alpha-D-ribose 1-diphosphate + anthranilate. It participates in amino-acid biosynthesis; L-tryptophan biosynthesis; L-tryptophan from chorismate: step 2/5. Its function is as follows. Catalyzes the transfer of the phosphoribosyl group of 5-phosphorylribose-1-pyrophosphate (PRPP) to anthranilate to yield N-(5'-phosphoribosyl)-anthranilate (PRA). This is Anthranilate phosphoribosyltransferase from Burkholderia vietnamiensis (strain G4 / LMG 22486) (Burkholderia cepacia (strain R1808)).